Consider the following 196-residue polypeptide: Acyl-homoserine-lactone synthase (196 aa).

This sequence belongs to the autoinducer synthase family.

The enzyme catalyses a fatty acyl-[ACP] + S-adenosyl-L-methionine = an N-acyl-L-homoserine lactone + S-methyl-5'-thioadenosine + holo-[ACP] + H(+). Its function is as follows. Required for the synthesis of a yet unknown N-aceyl-homoserine lactone (N-aceyl-HSL), an autoinducer molecule which binds to PhzR and thus regulates phenazine production. The polypeptide is Acyl-homoserine-lactone synthase (phzI) (Pseudomonas chlororaphis (Pseudomonas aureofaciens)).